The sequence spans 391 residues: Nicotinate phosphoribosyltransferase (391 aa).

H216 bears the Phosphohistidine; by autocatalysis mark.

The protein belongs to the NAPRTase family. Transiently phosphorylated on a His residue during the reaction cycle. Phosphorylation strongly increases the affinity for substrates and increases the rate of nicotinate D-ribonucleotide production. Dephosphorylation regenerates the low-affinity form of the enzyme, leading to product release.

It catalyses the reaction nicotinate + 5-phospho-alpha-D-ribose 1-diphosphate + ATP + H2O = nicotinate beta-D-ribonucleotide + ADP + phosphate + diphosphate. It functions in the pathway cofactor biosynthesis; NAD(+) biosynthesis; nicotinate D-ribonucleotide from nicotinate: step 1/1. Functionally, catalyzes the synthesis of beta-nicotinate D-ribonucleotide from nicotinate and 5-phospho-D-ribose 1-phosphate at the expense of ATP. This Bordetella petrii (strain ATCC BAA-461 / DSM 12804 / CCUG 43448) protein is Nicotinate phosphoribosyltransferase.